The following is a 152-amino-acid chain: FAD synthase (152 aa).

Residues 9–10 (TF), 14–17 (HPGH), and Asp-92 contribute to the ATP site.

It belongs to the archaeal FAD synthase family. In terms of assembly, homodimer. Requires a divalent metal cation as cofactor.

The enzyme catalyses FMN + ATP + H(+) = FAD + diphosphate. It functions in the pathway cofactor biosynthesis; FAD biosynthesis; FAD from FMN: step 1/1. Its function is as follows. Catalyzes the transfer of the AMP portion of ATP to flavin mononucleotide (FMN) to produce flavin adenine dinucleotide (FAD) coenzyme. This Ferroglobus placidus (strain DSM 10642 / AEDII12DO) protein is FAD synthase.